The chain runs to 193 residues: Achaete-scute homolog 2 (193 aa).

Disordered stretches follow at residues 1 to 27 (MDGG…RRPA), 37 to 56 (RRRP…ARRN), and 118 to 177 (GGLR…GALS). A bHLH domain is found at 50–102 (AAVARRNERERNRVKLVNLGFQALRQHVPHGGASKKLSKVETLRSAVEYIRAL). A compositionally biased stretch (low complexity) spans 140–150 (AASPSRASSSP).

Efficient DNA binding requires dimerization with another basic helix-loop-helix (bHLH) protein. Forms heterodimers with bHLH transcription factor TCF3. May not heterodimerise with bHLH protein HAND1. As to expression, expressed in the placenta at a stage between the first and second trimesters and when it matures, at about 32-36 weeks. Expressed in the extravillous trophoblasts, the intermediate trophoblasts, and at lower levels in the cytotrophoblasts and stroma of chorionic villi of the developing placenta. Expressed in follicular T-helper (Tfh) cells.

Its subcellular location is the nucleus. In terms of biological role, transcription factor. Binds to E-box motifs 5'-CANNTG-3' in the regulatory elements of target genes, probably as a heterodimer with another basic helix-loop-helix (bHLH) protein such as the transcription factor TCF3. May bind both open and closed chromatin, acting as a pioneer transcription factor to allow other factors to bind and activate lineage-specific genes. Required during post-implantation development for the generation of some differentiated trophoblast cell types. Transcriptional activity of ASCL2 may be antagonised in a subset of trophoblast cells by bHLH transcription factor HAND1, perhaps by competing for dimerization with other bHLH proteins. Involved in differentiation and function of follicular T-helper (Tfh) cells, thereby playing a role in germinal center responses; probably modulates expression of genes involved in Tfh cell function, such as BCL6. May also act as a suppressor of Th1-, Th2- and Th17-cell differentiation. Induces the formation of stem cells in intestinal crypts in vitro, synergistically activating transcription of target genes, such as SOX9, together with TCF4/beta-catenin. May form a bistable transcriptional switch, controlling expression of its own gene together with Wnt/R-spondin signaling, and thereby maintaining stem cell characteristics. Modulates expression of target genes, including perhaps down-regulating EGR1/Krox24 and chemokine CXCL10/Mob-1 and up-regulating CXCR4 and CDKN1C/p57kip2, in Schwann cells. May play a role in reducing proliferation of Schwann cells, perhaps acting via modulation of expression of CDKN1C. May be dispensable for blastocyst formation and later embryonic function. May be involved in the determination of neuronal precursors. The chain is Achaete-scute homolog 2 (ASCL2) from Homo sapiens (Human).